Consider the following 88-residue polypeptide: Alkene monooxygenase system, oxygenase component subunit gamma (88 aa).

It belongs to the TmoB/XamoB family. In terms of assembly, the alkene monooxygenase multicomponent enzyme system is composed of an electron transfer component and a monooxygenase component interacting with the effector protein XamoD. The electron transfer component is composed of a ferredoxin reductase (XamoF) and a ferredoxin (XamoC), and the monooxygenase component is formed by a heterohexamer (dimer of heterotrimers) of two alpha subunits (XamoA), two beta subunits (XamoE) and two gamma subunits (XamoB).

It is found in the cytoplasm. It catalyses the reaction propene + NADH + O2 + H(+) = 1,2-epoxypropane + NAD(+) + H2O. With respect to regulation, inhibited by propyne. Its function is as follows. Component of the alkene monooxygenase multicomponent enzyme system which catalyzes the O2- and NADH-dependent epoxidation of short chain (C2 to C6) alkenes to their corresponding epoxides. Also able to catalyze the oxidation of a number of chlorinated alkenes, including trichloroethylene, cis- and trans-1,2-dichloroethylene, vinyl chloride, 1-chloropropylene, 1,3-dichloropropylene and 2,3-dichloropropylene. The protein is Alkene monooxygenase system, oxygenase component subunit gamma of Xanthobacter autotrophicus (strain ATCC BAA-1158 / Py2).